Reading from the N-terminus, the 480-residue chain is Ribulose bisphosphate carboxylase large chain (480 aa).

A propeptide spanning residues 1-2 (MS) is cleaved from the precursor. Residue P3 is modified to N-acetylproline. At K14 the chain carries N6,N6,N6-trimethyllysine. 2 residues coordinate substrate: N123 and T173. The Proton acceptor role is filled by K175. K177 is a binding site for substrate. 3 residues coordinate Mg(2+): K201, D203, and E204. K201 carries the post-translational modification N6-carboxylysine. The active-site Proton acceptor is the H294. R295, H327, and S379 together coordinate substrate.

This sequence belongs to the RuBisCO large chain family. Type I subfamily. Heterohexadecamer of 8 large chains and 8 small chains; disulfide-linked. The disulfide link is formed within the large subunit homodimers. Requires Mg(2+) as cofactor. The disulfide bond which can form in the large chain dimeric partners within the hexadecamer appears to be associated with oxidative stress and protein turnover.

It localises to the plastid. It is found in the chloroplast. The catalysed reaction is 2 (2R)-3-phosphoglycerate + 2 H(+) = D-ribulose 1,5-bisphosphate + CO2 + H2O. The enzyme catalyses D-ribulose 1,5-bisphosphate + O2 = 2-phosphoglycolate + (2R)-3-phosphoglycerate + 2 H(+). Its function is as follows. RuBisCO catalyzes two reactions: the carboxylation of D-ribulose 1,5-bisphosphate, the primary event in carbon dioxide fixation, as well as the oxidative fragmentation of the pentose substrate in the photorespiration process. Both reactions occur simultaneously and in competition at the same active site. This Phalaenopsis aphrodite subsp. formosana (Moth orchid) protein is Ribulose bisphosphate carboxylase large chain.